The primary structure comprises 206 residues: Glycerol-3-phosphate acyltransferase (206 aa).

Helical transmembrane passes span 3–23, 51–71, 83–103, 113–133, and 162–182; these read LGWLLVIGSYLLGSVSFSYII, VGPAVTVLLLDILKGVIAVVV, FAAAAGIAAIIGHNWPIYYGF, IGVLASLVPLAAVLAGVIAIG, and WFGYPVAYIYLTIIVAILSMW.

Belongs to the PlsY family. Probably interacts with PlsX.

The protein resides in the cell membrane. The enzyme catalyses an acyl phosphate + sn-glycerol 3-phosphate = a 1-acyl-sn-glycero-3-phosphate + phosphate. Its pathway is lipid metabolism; phospholipid metabolism. Functionally, catalyzes the transfer of an acyl group from acyl-phosphate (acyl-PO(4)) to glycerol-3-phosphate (G3P) to form lysophosphatidic acid (LPA). This enzyme utilizes acyl-phosphate as fatty acyl donor, but not acyl-CoA or acyl-ACP. This chain is Glycerol-3-phosphate acyltransferase, found in Halalkalibacterium halodurans (strain ATCC BAA-125 / DSM 18197 / FERM 7344 / JCM 9153 / C-125) (Bacillus halodurans).